A 193-amino-acid chain; its full sequence is Large ribosomal subunit protein bL25 (193 aa).

It belongs to the bacterial ribosomal protein bL25 family. CTC subfamily. As to quaternary structure, part of the 50S ribosomal subunit; part of the 5S rRNA/L5/L18/L25 subcomplex. Contacts the 5S rRNA. Binds to the 5S rRNA independently of L5 and L18.

Functionally, this is one of the proteins that binds to the 5S RNA in the ribosome where it forms part of the central protuberance. The polypeptide is Large ribosomal subunit protein bL25 (Hydrogenovibrio crunogenus (strain DSM 25203 / XCL-2) (Thiomicrospira crunogena)).